The primary structure comprises 466 residues: Asparagine--tRNA ligase (466 aa).

Belongs to the class-II aminoacyl-tRNA synthetase family. In terms of assembly, homodimer.

The protein resides in the cytoplasm. It catalyses the reaction tRNA(Asn) + L-asparagine + ATP = L-asparaginyl-tRNA(Asn) + AMP + diphosphate + H(+). The protein is Asparagine--tRNA ligase of Shewanella frigidimarina (strain NCIMB 400).